The chain runs to 454 residues: tRNA modification GTPase MnmE (454 aa).

Residues Arg-23, Glu-80, and Lys-120 each coordinate (6S)-5-formyl-5,6,7,8-tetrahydrofolate. The region spanning 216-377 is the TrmE-type G domain; the sequence is GMKVVIAGRP…LRSHLKEAMG (162 aa). Asn-226 provides a ligand contact to K(+). Residues 226–231, 245–251, 270–273, and 358–360 each bind GTP; these read NAGKSS, TDIAGTT, DTAG, and SAR. Ser-230 provides a ligand contact to Mg(2+). Residues Thr-245, Ile-247, and Thr-250 each contribute to the K(+) site. Thr-251 serves as a coordination point for Mg(2+). Lys-454 is a binding site for (6S)-5-formyl-5,6,7,8-tetrahydrofolate.

Belongs to the TRAFAC class TrmE-Era-EngA-EngB-Septin-like GTPase superfamily. TrmE GTPase family. As to quaternary structure, homodimer. Heterotetramer of two MnmE and two MnmG subunits. Requires K(+) as cofactor.

Its subcellular location is the cytoplasm. Exhibits a very high intrinsic GTPase hydrolysis rate. Involved in the addition of a carboxymethylaminomethyl (cmnm) group at the wobble position (U34) of certain tRNAs, forming tRNA-cmnm(5)s(2)U34. In Proteus mirabilis (strain HI4320), this protein is tRNA modification GTPase MnmE.